The following is a 108-amino-acid chain: uncharacterized protein (108 aa).

A helical transmembrane segment spans residues 7 to 27 (FIPMLLVANAAPYFFYPIFML).

It to N.crassa NCU05373.1.

The protein resides in the membrane. This is an uncharacterized protein from Schizosaccharomyces pombe (strain 972 / ATCC 24843) (Fission yeast).